The chain runs to 621 residues: Type 2 DNA topoisomerase 6 subunit B (621 aa).

Residues Asn48, Asp80, 101–102, 111–118, and Lys435 contribute to the ATP site; these read SR and GQQGIGIS.

Belongs to the TOP6B family. As to quaternary structure, homodimer. Heterotetramer of two Top6A and two Top6B chains.

It carries out the reaction ATP-dependent breakage, passage and rejoining of double-stranded DNA.. Relaxes both positive and negative superturns and exhibits a strong decatenase activity. The polypeptide is Type 2 DNA topoisomerase 6 subunit B (Methanosarcina acetivorans (strain ATCC 35395 / DSM 2834 / JCM 12185 / C2A)).